Consider the following 295-residue polypeptide: 4-diphosphocytidyl-2-C-methyl-D-erythritol kinase (295 aa).

Residue lysine 22 is part of the active site. 106-116 (PAGGGFGGGSS) is a binding site for ATP. The active site involves aspartate 148.

It belongs to the GHMP kinase family. IspE subfamily.

The catalysed reaction is 4-CDP-2-C-methyl-D-erythritol + ATP = 4-CDP-2-C-methyl-D-erythritol 2-phosphate + ADP + H(+). It participates in isoprenoid biosynthesis; isopentenyl diphosphate biosynthesis via DXP pathway; isopentenyl diphosphate from 1-deoxy-D-xylulose 5-phosphate: step 3/6. In terms of biological role, catalyzes the phosphorylation of the position 2 hydroxy group of 4-diphosphocytidyl-2C-methyl-D-erythritol. This chain is 4-diphosphocytidyl-2-C-methyl-D-erythritol kinase, found in Xanthomonas euvesicatoria pv. vesicatoria (strain 85-10) (Xanthomonas campestris pv. vesicatoria).